Consider the following 69-residue polypeptide: DNA-directed RNA polymerase subunit epsilon (69 aa).

This sequence belongs to the RNA polymerase subunit epsilon family. As to quaternary structure, RNAP is composed of a core of 2 alpha, a beta and a beta' subunit. The core is associated with a delta subunit, and at least one of epsilon or omega. When a sigma factor is associated with the core the holoenzyme is formed, which can initiate transcription.

The enzyme catalyses RNA(n) + a ribonucleoside 5'-triphosphate = RNA(n+1) + diphosphate. Its function is as follows. A non-essential component of RNA polymerase (RNAP). This chain is DNA-directed RNA polymerase subunit epsilon, found in Shouchella clausii (strain KSM-K16) (Alkalihalobacillus clausii).